A 575-amino-acid chain; its full sequence is Urease subunit alpha (575 aa).

One can recognise a Urease domain in the interval 138-575; that stretch reads GAVDCHVHLI…LPMAQRYFLF (438 aa). Residues His-143, His-145, and Lys-226 each contribute to the Ni(2+) site. Lys-226 bears the N6-carboxylysine mark. Substrate is bound at residue His-228. Ni(2+) contacts are provided by His-255 and His-281. His-329 (proton donor) is an active-site residue. Asp-369 contacts Ni(2+).

Belongs to the metallo-dependent hydrolases superfamily. Urease alpha subunit family. Heterotrimer of UreA (gamma), UreB (beta) and UreC (alpha) subunits. Three heterotrimers associate to form the active enzyme. Ni cation serves as cofactor. Post-translationally, carboxylation allows a single lysine to coordinate two nickel ions.

It is found in the cytoplasm. The catalysed reaction is urea + 2 H2O + H(+) = hydrogencarbonate + 2 NH4(+). It functions in the pathway nitrogen metabolism; urea degradation; CO(2) and NH(3) from urea (urease route): step 1/1. This chain is Urease subunit alpha, found in Frankia alni (strain DSM 45986 / CECT 9034 / ACN14a).